The primary structure comprises 367 residues: Ribosomal lysine N-methyltransferase 5 (367 aa).

The segment at 55-74 is disordered; that stretch reads EGGRKKKRVRRRNKASSVEE. The span at 58-68 shows a compositional bias: basic residues; the sequence is RKKKRVRRRNK. S-adenosyl-L-methionine-binding positions include Trp-110, 170-172, Asp-192, Trp-256, and Met-288; that span reads GAG.

The protein belongs to the class I-like SAM-binding methyltransferase superfamily. RKM5 family.

S-adenosyl-L-methionine-dependent protein-lysine N-methyltransferase that monomethylates 60S ribosomal protein L1 (RPL1A and RPL1B) at 'Lys-46'. The sequence is that of Ribosomal lysine N-methyltransferase 5 (RKM5) from Saccharomyces cerevisiae (strain Lalvin EC1118 / Prise de mousse) (Baker's yeast).